The following is a 108-amino-acid chain: Ig kappa chain V region 120 (108 aa).

The interval 1–23 (AFELTQTPSSVEAAVGGTVTIKC) is framework-1. The interval 24–34 (QSSQSIGTYLA) is complementarity-determining-1. The tract at residues 35–49 (WYZZKPGQPPKLLIY) is framework-2. Residues 50–56 (RASTLAS) form a complementarity-determining-2 region. The interval 57-88 (GVSSRFKGSGSGTEFTLTISGVECADAATYYC) is framework-3. The tract at residues 89–97 (QGTYYZSAS) is complementarity-determining-3. Positions 98-107 (FGGGTEVVVK) are framework-4.

This Oryctolagus cuniculus (Rabbit) protein is Ig kappa chain V region 120.